Here is a 112-residue protein sequence, read N- to C-terminus: Iron-sulfur cluster insertion protein ErpA (112 aa).

C40, C104, and C106 together coordinate iron-sulfur cluster.

Belongs to the HesB/IscA family. Homodimer. Iron-sulfur cluster serves as cofactor.

Functionally, required for insertion of 4Fe-4S clusters for at least IspG. This Pseudoalteromonas translucida (strain TAC 125) protein is Iron-sulfur cluster insertion protein ErpA.